We begin with the raw amino-acid sequence, 424 residues long: CinA-like protein (424 aa).

It belongs to the CinA family.

The sequence is that of CinA-like protein from Prochlorococcus marinus (strain MIT 9312).